Here is a 511-residue protein sequence, read N- to C-terminus: MKDNKIIIFDTTLRDGEQALGSSLGINQKLQIALALENLGVDVIEAGFPVSSQGDFKAVQKIASKVKNSTICALSRVLDKDIDMAYEALKVAKHFRIHTFIATSTLHMQDKLKKDFDEILSMAKRAIIRARSYTDDVEFSCEDAGRTPIDNLCFMVENAIKAGAKTINIPDTVGYTLPSEFANIIKILFNKVPNIDKAIISVHCHNDLGMATGNSLSAILQGARQIECTINGLGERAGNCALEEVVMAIKTRKDYLKGFYTDIKCENIFKTSKLVSAITNESIPSHKAIVGSNAFSHSSGIHQDGVLKNRQTYEIISPSAIGIHENRMLMTARSGRAMIKTCLENLGYDENTYNLDDVYERFLRLADKKGQVYDYDLEALMFLSYENEEENKFILEKLSVISGNIPTACVCMRIKEELKTEACTGNGPVEAVFNCIARITNLKPALKAYSINAKSSGVDAQGQVDVDLEFKGRKFHGKGISTDVIEASAQAFVSAYNAIYRSLKVEERKMA.

In terms of domain architecture, Pyruvate carboxyltransferase spans 6-269; the sequence is IIIFDTTLRD…YTDIKCENIF (264 aa). Residues Asp-15, His-203, His-205, and Asn-239 each contribute to the Mn(2+) site. The regulatory domain stretch occupies residues 394–511; it reads ILEKLSVISG…SLKVEERKMA (118 aa).

The protein belongs to the alpha-IPM synthase/homocitrate synthase family. LeuA type 1 subfamily. In terms of assembly, homodimer. Mn(2+) serves as cofactor.

It localises to the cytoplasm. It carries out the reaction 3-methyl-2-oxobutanoate + acetyl-CoA + H2O = (2S)-2-isopropylmalate + CoA + H(+). The protein operates within amino-acid biosynthesis; L-leucine biosynthesis; L-leucine from 3-methyl-2-oxobutanoate: step 1/4. Catalyzes the condensation of the acetyl group of acetyl-CoA with 3-methyl-2-oxobutanoate (2-ketoisovalerate) to form 3-carboxy-3-hydroxy-4-methylpentanoate (2-isopropylmalate). This chain is 2-isopropylmalate synthase, found in Campylobacter jejuni subsp. jejuni serotype O:6 (strain 81116 / NCTC 11828).